The following is a 680-amino-acid chain: MLTHKTCQARKKMQVSFVIRDAEEKQHRNGVNSLQLDPNNGKLYSAGRDAIIRVWNTRSESSEKYIQSMEHHNDWVNDIVLCCNGRNLISASCDTTVKVWNAQKGFCMSTLRTHRDYVQALAYAKDREQVASAGLDKAIFLWDVNTLTALTASNNTVTTSSLTGSKDSIYSLAMNPSGTVIVSGSTENILRIWDPRTCMRSMKLRGHTENVRCLVVSPDGNQVVSGSSDGTIKVWNLGQQRCVQTIHVHKEGVWSLLMSENFQYIISGSRDQNIIVTEMRNPSNKTLVCEEKAPVLSLGYNMDKTGVWATTWNSDIRCWKLPMYDRGTLNSSGGLDAQWTQGGTELACIKGGAAIKECTVLNDKRYILTKDSQDQVVLYDVLRVVKKDTLGPIDYEAEVKKRNKQVYIPNWFTVDLKTGMPTIVLGQEEVDCFSAWVSIEAGLPECVDPTTEIKINYGKLLLEALLEYWTPPHSIPQNELEPDMHGNGYFQVPKHTPVIFSEVGGRTVCRLLVRDAAGDSECTLLHETAPQWVTDVVIEKNIPKFLKIPFFLQPHPQMTKPERTKKDRLVANEFIQCRKVCEHVLEKVLNAETTPSGANANNSLQNSQSDGNSEGSQLPAEERIELSCNDVVVDPNMDLRTVRHFIWKQSTDLTFQYKTKQNFNYDGSIGDSLERVTRKY.

8 WD repeats span residues 26–65 (QHRNGVNSLQLDPNNGKLYSAGRDAIIRVWNTRSESSEKY), 71–110 (HHNDWVNDIVLCCNGRNLISASCDTTVKVWNAQKGFCMST), 113–152 (THRDYVQALAYAKDREQVASAGLDKAIFLWDVNTLTALTA), 164–203 (GSKDSIYSLAMNPSGTVIVSGSTENILRIWDPRTCMRSMK), 206–245 (GHTENVRCLVVSPDGNQVVSGSSDGTIKVWNLGQQRCVQT), 248–287 (VHKEGVWSLLMSENFQYIISGSRDQNIIVTEMRNPSNKTL), 290–329 (EEKAPVLSLGYNMDKTGVWATTWNSDIRCWKLPMYDRGTL), and 350–389 (KGGAAIKECTVLNDKRYILTKDSQDQVVLYDVLRVVKKDT). Positions 594-618 (TPSGANANNSLQNSQSDGNSEGSQL) are disordered. Residues 596–609 (SGANANNSLQNSQS) are compositionally biased toward low complexity.

It belongs to the WD repeat WDR48 family. As to quaternary structure, catalytic component of the Usp12-46 deubiquitylase complex consisting of Usp12-46, Wdr20 and Uaf1; regulatory subunit that, together wtih Wdr20, stabilizes Usp12-46. The Usp12-46 deubiquitylase complex associates with arr/arrow; the interaction leads to deubiquitination and stabilization of arr/arrow.

In terms of biological role, regulatory component of the Usp12-46 deubiquitylase complex. activates deubiquitination by increasing the catalytic turnover without increasing the affinity of deubiquitinating enzymes for the substrate. The complex deubiquitylates the wg/wingless-signaling receptor arr/arrow, which stabilizes the receptor and increases its concentration at the cell surface; this enhances the sensitivity of cells to wg/wingless-signal stimulation. This increases the amplitude and spatial range of the signaling response to the wg/wingless morphogen gradient, facilitating the precise concentration-dependent regulation of its target genes. Together with Wdr20 and Usp12-46 required for wg/wingless-mediated signaling in the wing imaginal disc and for wg/wingless-dependent regulation of intestinal stem cell proliferation. This is WD repeat-containing protein 48 homolog from Drosophila persimilis (Fruit fly).